The following is a 184-amino-acid chain: ATP synthase subunit b, chloroplastic (184 aa).

Residues 27–49 (LATNPINLSVVLGVLIFFGKGVL) traverse the membrane as a helical segment.

It belongs to the ATPase B chain family. F-type ATPases have 2 components, F(1) - the catalytic core - and F(0) - the membrane proton channel. F(1) has five subunits: alpha(3), beta(3), gamma(1), delta(1), epsilon(1). F(0) has four main subunits: a(1), b(1), b'(1) and c(10-14). The alpha and beta chains form an alternating ring which encloses part of the gamma chain. F(1) is attached to F(0) by a central stalk formed by the gamma and epsilon chains, while a peripheral stalk is formed by the delta, b and b' chains.

It localises to the plastid. Its subcellular location is the chloroplast thylakoid membrane. Functionally, f(1)F(0) ATP synthase produces ATP from ADP in the presence of a proton or sodium gradient. F-type ATPases consist of two structural domains, F(1) containing the extramembraneous catalytic core and F(0) containing the membrane proton channel, linked together by a central stalk and a peripheral stalk. During catalysis, ATP synthesis in the catalytic domain of F(1) is coupled via a rotary mechanism of the central stalk subunits to proton translocation. Its function is as follows. Component of the F(0) channel, it forms part of the peripheral stalk, linking F(1) to F(0). The sequence is that of ATP synthase subunit b, chloroplastic from Solanum bulbocastanum (Wild potato).